We begin with the raw amino-acid sequence, 218 residues long: Twisted gastrulation protein homolog 1-B (218 aa).

Positions 1–25 (MKPSFLHIPAAALLLCSLWILPIHC) are cleaved as a signal peptide. N-linked (GlcNAc...) asparagine glycosylation is found at Asn-52, Asn-81, and Asn-147.

The protein belongs to the twisted gastrulation protein family. Binds directly to bmp2, bmp4 and bmp7 and can form a ternary complex with bmps and chordin, thus preventing the binding of bmps to their cell surface receptors.

It localises to the secreted. In terms of biological role, involved in dorsal-ventral patterning, permitting peak BMP signaling by antagonizing the residual anti-BMP activity of the cleavage products of chrd. Functions to promote the formation of ventral mesoderm by increasing the activity of bmp7 and other BMPS. Seems to antagonize BMP signaling by forming ternary complexes with chrd and BMPs, thereby preventing BMPs from binding to their receptors. In addition to the anti-BMP function, also has pro-BMP activity, partly mediated by cleavage and degradation of chrd, which releases BMPs from ternary complexes. May be an important modulator of BMP-regulated cartilage development and chondrocyte differentiation. The chain is Twisted gastrulation protein homolog 1-B (twsg1-b) from Xenopus laevis (African clawed frog).